Reading from the N-terminus, the 260-residue chain is tRNA pseudouridine synthase A (260 aa).

Asp-60 acts as the Nucleophile in catalysis. Tyr-118 serves as a coordination point for substrate.

The protein belongs to the tRNA pseudouridine synthase TruA family. As to quaternary structure, homodimer.

The catalysed reaction is uridine(38/39/40) in tRNA = pseudouridine(38/39/40) in tRNA. Functionally, formation of pseudouridine at positions 38, 39 and 40 in the anticodon stem and loop of transfer RNAs. The chain is tRNA pseudouridine synthase A from Leuconostoc citreum (strain KM20).